We begin with the raw amino-acid sequence, 285 residues long: Homeobox protein Hox-A13b (285 aa).

The homeobox DNA-binding region spans 219 to 278 (GRKKRVPYTKVQLKELEREYAANKFITKDKRRRISAQTNLTERQVTIWFQNRRVKEKKVV).

This sequence belongs to the Abd-B homeobox family.

The protein resides in the nucleus. Sequence-specific transcription factor which is part of a developmental regulatory system that provides cells with specific positional identities on the anterior-posterior axis. This is Homeobox protein Hox-A13b (hoxa13b) from Takifugu rubripes (Japanese pufferfish).